The following is a 99-amino-acid chain: Large ribosomal subunit protein eL30 (99 aa).

This sequence belongs to the eukaryotic ribosomal protein eL30 family. As to quaternary structure, part of the 50S ribosomal subunit.

The chain is Large ribosomal subunit protein eL30 from Pyrococcus furiosus (strain ATCC 43587 / DSM 3638 / JCM 8422 / Vc1).